An 816-amino-acid polypeptide reads, in one-letter code: Protein hunchback (816 aa).

Disordered stretches follow at residues 33–92 (LSHH…QPMD), 129–151 (QQHF…GGFN), 165–185 (YYGG…PTAV), and 197–229 (ALTP…LMSN). Composition is skewed to low complexity over residues 49 to 60 (SNSNSGASSPRQ), 79 to 89 (QQQQQQQQQQQ), and 129 to 139 (QQHFQAAQHQQ). A Phosphothreonine modification is found at Thr-199. Residues Ser-209, Ser-228, Ser-230, and Ser-231 each carry the phosphoserine modification. Positions 219 to 229 (EPEKEHDLMSN) are enriched in basic and acidic residues. 4 C2H2-type zinc fingers span residues 261 to 283 (YKCK…TRTH), 290 to 312 (LQCA…IRKH), 318 to 340 (FQCD…RKSH), and 346 to 364 (YRCA…FKLH). 3 disordered regions span residues 387-427 (VIDV…QQQQ), 536-612 (LQQQ…QLPH), and 679-734 (GSSA…SNPT). Low complexity-rich tracts occupy residues 399-427 (SKSF…QQQQ) and 536-560 (LQQQ…QQQQ). Residues 567 to 578 (NEEDEEEEEHED) are compositionally biased toward acidic residues. A phosphoserine mark is found at Ser-584 and Ser-587. Positions 712–734 (SASSTASSSGNSSNASSSTSNPT) are enriched in low complexity. C2H2-type zinc fingers lie at residues 763–785 (YECK…MGYH) and 791–815 (FKCN…RNAH).

Belongs to the hunchback C2H2-type zinc-finger protein family.

The protein localises to the nucleus. Gap class segmentation protein that controls development of head structures. This is Protein hunchback from Drosophila virilis (Fruit fly).